We begin with the raw amino-acid sequence, 724 residues long: Semaphorin-2A (724 aa).

The first 25 residues, 1–25 (MSLLQLSPLLALLLLLCSSVSETAA), serve as a signal peptide directing secretion. The 478-residue stretch at 45–522 (QGNNNYGKHG…TDHRIKQIDL (478 aa)) folds into the Sema domain. N-linked (GlcNAc...) asparagine glycosylation occurs at Asn95. Residues Cys118 and Cys129 are joined by a disulfide bond. Asn163, Asn190, Asn229, and Asn314 each carry an N-linked (GlcNAc...) asparagine glycan. 2 cysteine pairs are disulfide-bonded: Cys291–Cys399 and Cys315–Cys358. An N-linked (GlcNAc...) asparagine glycan is attached at Asn401. Cystine bridges form between Cys525-Cys541 and Cys535-Cys550. Positions 552–663 (PYELDLLQDV…LCSYNITVDA (112 aa)) constitute an Ig-like C2-type domain. A glycan (N-linked (GlcNAc...) asparagine) is linked at Asn563. A disulfide bridge connects residues Cys590 and Cys647. 3 N-linked (GlcNAc...) asparagine glycosylation sites follow: Asn658, Asn670, and Asn708.

Belongs to the semaphorin family. As to quaternary structure, interacts with PlexB. In terms of tissue distribution, transiently expressed by a single large muscle during motoneuron outgrowth and synapse formation.

The protein localises to the secreted. In terms of biological role, ligand for transmembrane receptor PlexB. Plays a role in growth cone guidance. Required for both proper adult behavior and survival. Can function as a selective target-derived signal that inhibits the formation of specific synaptic terminal arbors. Function in neurons is essential for adult survival, motor neuron survival, and is important for climbing behavior and activity. During embryogenesis, plays an important role in correct salivary gland positioning. The chain is Semaphorin-2A from Drosophila melanogaster (Fruit fly).